An 83-amino-acid chain; its full sequence is Large ribosomal subunit protein bL27 (83 aa).

Residues 1-21 (MAHKRSSGAGRNGRDSNPKYL) form a disordered region.

Belongs to the bacterial ribosomal protein bL27 family.

In Kosmotoga olearia (strain ATCC BAA-1733 / DSM 21960 / TBF 19.5.1), this protein is Large ribosomal subunit protein bL27.